Reading from the N-terminus, the 132-residue chain is Small ribosomal subunit protein uS11 (132 aa).

The tract at residues 1-21 (MAAPKSAVRKPRRKDKKNIAV) is disordered. A compositionally biased stretch (basic residues) spans 7–16 (AVRKPRRKDK).

The protein belongs to the universal ribosomal protein uS11 family. Part of the 30S ribosomal subunit. Interacts with proteins S7 and S18. Binds to IF-3.

In terms of biological role, located on the platform of the 30S subunit, it bridges several disparate RNA helices of the 16S rRNA. Forms part of the Shine-Dalgarno cleft in the 70S ribosome. The protein is Small ribosomal subunit protein uS11 of Clavibacter sepedonicus (Clavibacter michiganensis subsp. sepedonicus).